A 668-amino-acid chain; its full sequence is tRNA 5-methylaminomethyl-2-thiouridine biosynthesis bifunctional protein MnmC (668 aa).

The tRNA (mnm(5)s(2)U34)-methyltransferase stretch occupies residues 1–245 (MKHYSIQPAN…KREMLCGVME (245 aa)). Residues 270–668 (IGGGIASALL…LLKGKAVKAG (399 aa)) are FAD-dependent cmnm(5)s(2)U34 oxidoreductase.

The protein in the N-terminal section; belongs to the methyltransferase superfamily. tRNA (mnm(5)s(2)U34)-methyltransferase family. It in the C-terminal section; belongs to the DAO family. It depends on FAD as a cofactor.

The protein resides in the cytoplasm. It carries out the reaction 5-aminomethyl-2-thiouridine(34) in tRNA + S-adenosyl-L-methionine = 5-methylaminomethyl-2-thiouridine(34) in tRNA + S-adenosyl-L-homocysteine + H(+). In terms of biological role, catalyzes the last two steps in the biosynthesis of 5-methylaminomethyl-2-thiouridine (mnm(5)s(2)U) at the wobble position (U34) in tRNA. Catalyzes the FAD-dependent demodification of cmnm(5)s(2)U34 to nm(5)s(2)U34, followed by the transfer of a methyl group from S-adenosyl-L-methionine to nm(5)s(2)U34, to form mnm(5)s(2)U34. This is tRNA 5-methylaminomethyl-2-thiouridine biosynthesis bifunctional protein MnmC from Escherichia coli (strain K12 / DH10B).